A 477-amino-acid polypeptide reads, in one-letter code: 3-isopropylmalate dehydratase large subunit (477 aa).

[4Fe-4S] cluster is bound by residues C351, C411, and C414.

Belongs to the aconitase/IPM isomerase family. LeuC type 1 subfamily. As to quaternary structure, heterodimer of LeuC and LeuD. The cofactor is [4Fe-4S] cluster.

It catalyses the reaction (2R,3S)-3-isopropylmalate = (2S)-2-isopropylmalate. It participates in amino-acid biosynthesis; L-leucine biosynthesis; L-leucine from 3-methyl-2-oxobutanoate: step 2/4. Catalyzes the isomerization between 2-isopropylmalate and 3-isopropylmalate, via the formation of 2-isopropylmaleate. The protein is 3-isopropylmalate dehydratase large subunit of Kineococcus radiotolerans (strain ATCC BAA-149 / DSM 14245 / SRS30216).